The sequence spans 280 residues: HCLS1-associated protein X-1 (280 aa).

S2 is modified (N-acetylserine). Positions 2-45 (SVFDLFRGFFGFPGPRSHRDPFFGGMTRDDDDDDDDDDEAEEDR) are required for localization in mitochondria. Disordered regions lie at residues 12–70 (GFPG…SFSP) and 100–263 (TLPS…SALD). Over residues 30-43 (DDDDDDDDDDEAEE) the composition is skewed to acidic residues. An involved in HCLS1 binding region spans residues 115–280 (TPGERLREGQ…LLLGRWFRSR (166 aa)). Basic and acidic residues-rich tracts occupy residues 116 to 125 (PGERLREGQT) and 134 to 154 (PDSH…KPES). The interval 176–207 (VSPHSRAKEDKDLDSQVSQEGLGPLLQPQPKS) is involved in CASP9 binding. Positions 177–248 (SPHSRAKEDK…TTVTHQEAHD (72 aa)) are involved in GNA13 binding. The segment at 184 to 280 (EDKDLDSQVS…LLLGRWFRSR (97 aa)) is required for localization in sarcoplasmic reticulum. The interval 185–280 (DKDLDSQVSQ…LLLGRWFRSR (96 aa)) is involved in PKD2 binding. A phosphoserine mark is found at S190 and S193. The involved in PLN binding stretch occupies residues 204–226 (QPKSYFKSISVTKITKPDGTVEE). The tract at residues 204–246 (QPKSYFKSISVTKITKPDGTVEERRTVVDSEGRRETTVTHQEA) is involved in ATP2A2 binding. Residues 211-280 (SISVTKITKP…LLLGRWFRSR (70 aa)) are mediates interaction with UCP3. Over residues 218 to 256 (TKPDGTVEERRTVVDSEGRRETTVTHQEAHDSSRSDPDS) the composition is skewed to basic and acidic residues. Residues 271-280 (LLLGRWFRSR) are required for ITGB6 binding.

This sequence belongs to the HAX1 family. In terms of assembly, interacts with ABCB1, ABCB4 and ABCB11. Directly associates with HCLS1/HS1, through binding to its N-terminal region. Interacts with CTTN. Interacts with PKD2. Interacts with GNA13. Interacts with CASP9. Interacts with ITGB6. Interacts with PLN and ATP2A2; these interactions are inhibited by calcium. Interacts with GRB7. Interacts (via C-terminus) with XIAP/BIRC4 (via BIR 2 domain and BIR 3 domain) and this interaction blocks ubiquitination of XIAP/BIRC4. Interacts with TPC2. Interacts with KCNC3. Interacts with XPO1. Interacts with RNF217. Interacts with UCP3; the interaction is direct and calcium-dependent. Interacts with MAPRE2; this interaction regulates cell migration in keratinocytes. In terms of tissue distribution, ubiquitous, with highest levels in kidney and liver (at protein level).

The protein resides in the mitochondrion matrix. It localises to the endoplasmic reticulum. Its subcellular location is the nucleus membrane. The protein localises to the cytoplasmic vesicle. It is found in the cytoplasm. The protein resides in the cell cortex. It localises to the cell membrane. Its subcellular location is the sarcoplasmic reticulum. The protein localises to the P-body. It is found in the nucleus. Recruits the Arp2/3 complex to the cell cortex and regulates reorganization of the cortical actin cytoskeleton via its interaction with KCNC3 and the Arp2/3 complex. Slows down the rate of inactivation of KCNC3 channels. Promotes GNA13-mediated cell migration. Involved in the clathrin-mediated endocytosis pathway. May be involved in internalization of ABC transporters such as ABCB11. May inhibit CASP9 and CASP3. Promotes cell survival. May regulate intracellular calcium pools. This is HCLS1-associated protein X-1 (Hax1) from Mus musculus (Mouse).